The following is a 1175-amino-acid chain: 1-phosphatidylinositol 4,5-bisphosphate phosphodiesterase beta-4 (1175 aa).

N-acetylalanine is present on Ala2. Positions 313–463 (QEMDHPLAHY…LKRKILIKNK (151 aa)) constitute a PI-PLC X-box domain. Catalysis depends on residues His328 and His375. A disordered region spans residues 482-511 (EAGESASPANILEDDNEEEIESADQEEEAH). The segment covering 493-508 (LEDDNEEEIESADQEE) has biased composition (acidic residues). The 117-residue stretch at 565 to 681 (LSTMINYAQP…GYLLKPDFMR (117 aa)) folds into the PI-PLC Y-box domain. The C2 domain maps to 684-809 (DRTFDPFSET…SLRNEGNKPL (126 aa)). 2 disordered regions span residues 863-895 (ADVPSDTSKNDKKGKANTAKANVTPQSSSELRP) and 1082-1110 (KISMENSKAISQDKSIKNKAERERRVREL). Composition is skewed to polar residues over residues 881-895 (AKANVTPQSSSELRP) and 1085-1094 (MENSKAISQD). Position 886 is a phosphothreonine (Thr886). The span at 1095–1109 (KSIKNKAERERRVRE) shows a compositional bias: basic and acidic residues.

Ca(2+) serves as cofactor. Preferentially expressed in the retina.

It localises to the cell membrane. The enzyme catalyses a 1,2-diacyl-sn-glycero-3-phospho-(1D-myo-inositol-4,5-bisphosphate) + H2O = 1D-myo-inositol 1,4,5-trisphosphate + a 1,2-diacyl-sn-glycerol + H(+). It carries out the reaction a 1,2-diacyl-sn-glycero-3-phospho-(1D-myo-inositol) + H2O = 1D-myo-inositol 1-phosphate + a 1,2-diacyl-sn-glycerol + H(+). Its function is as follows. Activated phosphatidylinositol-specific phospholipase C enzymes catalyze the production of the second messenger molecules diacylglycerol (DAG) and inositol 1,4,5-trisphosphate (IP3) involved in G-protein coupled receptor signaling pathways. PLCB4 is a direct effector of the endothelin receptor signaling pathway that plays an essential role in lower jaw and middle ear structures development. This Homo sapiens (Human) protein is 1-phosphatidylinositol 4,5-bisphosphate phosphodiesterase beta-4.